We begin with the raw amino-acid sequence, 219 residues long: C-8 sterol isomerase erg2 (219 aa).

A helical transmembrane segment spans residues Met1–Ile21.

The protein belongs to the ERG2 family.

It is found in the endoplasmic reticulum membrane. The enzyme catalyses fecosterol = episterol. Its pathway is steroid metabolism; ergosterol biosynthesis. In terms of biological role, C-8 sterol isomerase; part of the third module of ergosterol biosynthesis pathway that includes by the late steps of the pathway. Erg2 catalyzes the reaction which results in unsaturation at C-7 in the B ring of sterols and thus converts fecosterol to episterol. The third module or late pathway involves the ergosterol synthesis itself through consecutive reactions that mainly occur in the endoplasmic reticulum (ER) membrane. Firstly, the squalene synthase erg9 catalyzes the condensation of 2 farnesyl pyrophosphate moieties to form squalene, which is the precursor of all steroids. Secondly, squalene is converted into lanosterol by the consecutive action of the squalene epoxidase erg1 and the lanosterol synthase erg7. The lanosterol 14-alpha-demethylase erg11/cyp1 catalyzes C14-demethylation of lanosterol to produce 4,4'-dimethyl cholesta-8,14,24-triene-3-beta-ol. In the next steps, a complex process involving various demethylation, reduction and desaturation reactions catalyzed by the C-14 reductase erg24 and the C-4 demethylation complex erg25-erg26-erg27 leads to the production of zymosterol. Erg28 likely functions in the C-4 demethylation complex reaction by tethering erg26 and Erg27 to the endoplasmic reticulum or to facilitate interaction between these proteins. Then, the sterol 24-C-methyltransferase erg6 catalyzes the methyl transfer from S-adenosyl-methionine to the C-24 of zymosterol to form fecosterol. The C-8 sterol isomerase erg2 catalyzes the reaction which results in unsaturation at C-7 in the B ring of sterols and thus converts fecosterol to episterol. The sterol-C5-desaturases erg31 and erg32 then catalyze the introduction of a C-5 double bond in the B ring to produce 5-dehydroepisterol. The C-22 sterol desaturase erg5 further converts 5-dehydroepisterol into ergosta-5,7,22,24(28)-tetraen-3beta-ol by forming the C-22(23) double bond in the sterol side chain. Finally, ergosta-5,7,22,24(28)-tetraen-3beta-ol is substrate of the C-24(28) sterol reductase erg4 to produce ergosterol. In the genus Schizosaccharomyces, a second route exists between lanosterol and fecosterol, via the methylation of lanosterol to eburicol by erg6, followed by C14-demethylation by erg11/cyp1 and C4-demethylation by the demethylation complex erg25-erg26-erg27. The polypeptide is C-8 sterol isomerase erg2 (Schizosaccharomyces pombe (strain 972 / ATCC 24843) (Fission yeast)).